The sequence spans 467 residues: Amino-acid permease RocE (467 aa).

The next 12 membrane-spanning stretches (helical) occupy residues 21 to 41 (FMIS…GFTI), 47 to 67 (LGAV…MLCL), 87 to 107 (FISP…WAVT), 122 to 142 (WFPH…MFIL), 162 to 182 (ILII…LIDL), 207 to 227 (MLIT…IGVA), 246 to 266 (VWRT…MIPW), 283 to 303 (IGIP…LLSV), 336 to 356 (VPMY…LTKF), 361 to 381 (TVYM…WITI), 409 to 429 (YPVL…SLAF), and 435 to 455 (IALY…HVVI).

It belongs to the amino acid-polyamine-organocation (APC) superfamily. Amino acid transporter (AAT) (TC 2.A.3.1) family.

The protein resides in the cell membrane. Its function is as follows. Putative transport protein involved in arginine degradative pathway. Probably transports arginine or ornithine. In Bacillus subtilis (strain 168), this protein is Amino-acid permease RocE.